Consider the following 416-residue polypeptide: D-amino acid dehydrogenase 2 (416 aa).

An FAD-binding site is contributed by V5–Y19.

Belongs to the DadA oxidoreductase family. FAD serves as cofactor.

The catalysed reaction is a D-alpha-amino acid + A + H2O = a 2-oxocarboxylate + AH2 + NH4(+). Its function is as follows. Oxidative deamination of D-amino acids. This is D-amino acid dehydrogenase 2 (dadA2) from Pseudomonas aeruginosa (strain ATCC 15692 / DSM 22644 / CIP 104116 / JCM 14847 / LMG 12228 / 1C / PRS 101 / PAO1).